Reading from the N-terminus, the 393-residue chain is NAD(P)H-quinone oxidoreductase subunit H, chloroplastic (393 aa).

Belongs to the complex I 49 kDa subunit family. As to quaternary structure, NDH is composed of at least 16 different subunits, 5 of which are encoded in the nucleus.

Its subcellular location is the plastid. The protein localises to the chloroplast thylakoid membrane. The enzyme catalyses a plastoquinone + NADH + (n+1) H(+)(in) = a plastoquinol + NAD(+) + n H(+)(out). It carries out the reaction a plastoquinone + NADPH + (n+1) H(+)(in) = a plastoquinol + NADP(+) + n H(+)(out). NDH shuttles electrons from NAD(P)H:plastoquinone, via FMN and iron-sulfur (Fe-S) centers, to quinones in the photosynthetic chain and possibly in a chloroplast respiratory chain. The immediate electron acceptor for the enzyme in this species is believed to be plastoquinone. Couples the redox reaction to proton translocation, and thus conserves the redox energy in a proton gradient. This chain is NAD(P)H-quinone oxidoreductase subunit H, chloroplastic, found in Lobularia maritima (Sweet alyssum).